A 410-amino-acid polypeptide reads, in one-letter code: WD repeat-containing protein jip5 (410 aa).

WD repeat units follow at residues 9–48 (PLSA…EEEH), 74–113 (RHKG…VENK), 119–160 (AKDG…SKVA), 223–264 (VSST…DQDE), 273–316 (GGGE…VVSE), and 320–357 (DETE…IGGE). Residues 41 to 65 (PTEEEEEHSDDEQASVSSSRNGKGH) are disordered. Positions 43–53 (EEEEEHSDDEQ) are enriched in acidic residues. Positions 354 to 410 (IGGEKRGFGGDSDDSDDDSDDSDHEPKQGDDSRRKRKKQKGKDRGKGPEIMAFADLD) are disordered. Residues 364 to 376 (DSDDSDDDSDDSD) are compositionally biased toward acidic residues. The span at 377–386 (HEPKQGDDSR) shows a compositional bias: basic and acidic residues.

It belongs to the WD repeat WDR55 family.

It localises to the nucleus. The protein resides in the nucleolus. The protein is WD repeat-containing protein jip5 (jip5) of Emericella nidulans (strain FGSC A4 / ATCC 38163 / CBS 112.46 / NRRL 194 / M139) (Aspergillus nidulans).